Here is a 476-residue protein sequence, read N- to C-terminus: Cyclase-associated protein 1 (476 aa).

Disordered stretches follow at residues Lys224–Met262 and Gly277–Met319. Over residues Lys231–Pro243 the composition is skewed to pro residues. Over residues Ser246–Ser256 the composition is skewed to low complexity. Residues Lys280–Arg293 show a composition bias toward basic and acidic residues. One can recognise a C-CAP/cofactor C-like domain in the interval Pro316–Leu453.

The protein belongs to the CAP family. In terms of tissue distribution, expressed in roots, cotyledons, leaves, stems, flowers, pollen and shoots. Not detected in siliques.

Actin monomer binding protein that accelerates the exchange of ADP for ATP. Regulates the pool of unpolymerized ATP-actin. Key intermediate between actin-depolymerizing factor (ADF)-mediated disassembly and the profilin-based nucleation and elongation machinery. The polypeptide is Cyclase-associated protein 1 (CAP1) (Arabidopsis thaliana (Mouse-ear cress)).